The chain runs to 364 residues: Fructose-bisphosphate aldolase A (364 aa).

At Tyr-5 the chain carries Phosphotyrosine. Thr-9 carries the post-translational modification Phosphothreonine. Ser-36 and Ser-39 each carry phosphoserine. Residue Lys-42 is modified to N6-acetyllysine; alternate. Lys-42 participates in a covalent cross-link: Glycyl lysine isopeptide (Lys-Gly) (interchain with G-Cter in SUMO1); alternate. Lys-42 participates in a covalent cross-link: Glycyl lysine isopeptide (Lys-Gly) (interchain with G-Cter in SUMO2); alternate. Arg-43 contacts beta-D-fructose 1,6-bisphosphate. Ser-46 is modified (phosphoserine). N6-(2-hydroxyisobutyryl)lysine is present on Lys-99. N6-acetyllysine is present on Lys-108. N6-acetyllysine; alternate is present on Lys-111. Lys-111 is subject to N6-malonyllysine; alternate. Ser-132 is subject to Phosphoserine. Lys-147 bears the N6-(2-hydroxyisobutyryl)lysine mark. Residue Glu-188 is the Proton acceptor of the active site. Lys-230 acts as the Schiff-base intermediate with dihydroxyacetone-P in catalysis. Phosphoserine is present on Ser-272. Beta-D-fructose 1,6-bisphosphate-binding positions include 272-274, Ser-301, and Arg-304; that span reads SGG. The residue at position 312 (Lys-312) is an N6-malonyllysine. Lys-330 carries the post-translational modification N6-acetyllysine.

The protein belongs to the class I fructose-bisphosphate aldolase family. In terms of assembly, homotetramer. Interacts with SNX9 and WAS. Interacts with FBP2; the interaction blocks FBP2 inhibition by physiological concentrations of AMP and reduces inhibition by Ca(2+).

Its subcellular location is the cytoplasm. It localises to the myofibril. The protein resides in the sarcomere. It is found in the i band. The protein localises to the m line. The enzyme catalyses beta-D-fructose 1,6-bisphosphate = D-glyceraldehyde 3-phosphate + dihydroxyacetone phosphate. Its pathway is carbohydrate degradation; glycolysis; D-glyceraldehyde 3-phosphate and glycerone phosphate from D-glucose: step 4/4. Functionally, catalyzes the reversible conversion of beta-D-fructose 1,6-bisphosphate (FBP) into two triose phosphate and plays a key role in glycolysis and gluconeogenesis. In addition, may also function as scaffolding protein. In Mus musculus (Mouse), this protein is Fructose-bisphosphate aldolase A (Aldoa).